The primary structure comprises 438 residues: UDP-N-acetylmuramoylalanine--D-glutamate ligase (438 aa).

112-118 (GSNGKST) is a binding site for ATP.

The protein belongs to the MurCDEF family.

The protein resides in the cytoplasm. It catalyses the reaction UDP-N-acetyl-alpha-D-muramoyl-L-alanine + D-glutamate + ATP = UDP-N-acetyl-alpha-D-muramoyl-L-alanyl-D-glutamate + ADP + phosphate + H(+). Its pathway is cell wall biogenesis; peptidoglycan biosynthesis. Functionally, cell wall formation. Catalyzes the addition of glutamate to the nucleotide precursor UDP-N-acetylmuramoyl-L-alanine (UMA). The chain is UDP-N-acetylmuramoylalanine--D-glutamate ligase from Salmonella typhi.